Here is a 436-residue protein sequence, read N- to C-terminus: GTPase Der (436 aa).

2 consecutive EngA-type G domains span residues 4–167 and 176–351; these read PVVA…PKEE and VKFS…DNHS. GTP contacts are provided by residues 10 to 17, 57 to 61, 119 to 122, 182 to 189, 229 to 233, and 294 to 297; these read GRPNVGKS, DTGGI, NKVD, DTAGM, and NKWD. One can recognise a KH-like domain in the interval 352–436; that stretch reads LRVQSSMLND…PIRVIARKRK (85 aa).

This sequence belongs to the TRAFAC class TrmE-Era-EngA-EngB-Septin-like GTPase superfamily. EngA (Der) GTPase family. In terms of assembly, associates with the 50S ribosomal subunit.

Its function is as follows. GTPase that plays an essential role in the late steps of ribosome biogenesis. The sequence is that of GTPase Der from Listeria monocytogenes serotype 4b (strain F2365).